Here is a 503-residue protein sequence, read N- to C-terminus: Arabinose import ATP-binding protein AraG (503 aa).

ABC transporter domains lie at 5 to 240 (LRFD…MVGR) and 253 to 497 (LGDV…LPQG). Position 37-44 (37-44 (GENGAGKS)) interacts with ATP.

The protein belongs to the ABC transporter superfamily. Arabinose importer (TC 3.A.1.2.2) family. In terms of assembly, the complex is composed of two ATP-binding proteins (AraG), two transmembrane proteins (AraH) and a solute-binding protein (AraF).

The protein resides in the cell inner membrane. It catalyses the reaction L-arabinose(out) + ATP + H2O = L-arabinose(in) + ADP + phosphate + H(+). Its function is as follows. Part of the ABC transporter complex AraFGH involved in arabinose import. Responsible for energy coupling to the transport system. The sequence is that of Arabinose import ATP-binding protein AraG from Burkholderia pseudomallei (strain K96243).